Reading from the N-terminus, the 212-residue chain is ER lumen protein-retaining receptor 2 (212 aa).

Residues 1–4 are Lumenal-facing; sequence MNVF. Residues 5–24 traverse the membrane as a helical segment; the sequence is RLSGDLCHLAAIIILLLKIW. The Cytoplasmic portion of the chain corresponds to 25 to 32; it reads NSRSCAGI. A helical membrane pass occupies residues 33-52; the sequence is SGKSQLLFAMVFTTRYLDLF. The interval 47–48 is interaction with the K-D-E-L motif on target proteins; that stretch reads RY. The Lumenal segment spans residues 53–58; the sequence is TSFISL. A helical membrane pass occupies residues 59-79; that stretch reads YNTSMKVIYMGCAYATVYLIY. Residues 80–92 lie on the Cytoplasmic side of the membrane; it reads MKFKATYDGNHDT. A helical membrane pass occupies residues 93 to 110; sequence FRVEFLVVPVGGLSVLVN. Over 111 to 116 the chain is Lumenal; it reads HDFSPL. Residues 117–135 traverse the membrane as a helical segment; that stretch reads EILWTFSIYLESVAILPQL. Residues 136–149 lie on the Cytoplasmic side of the membrane; that stretch reads FMISKTGEAETITT. A helical transmembrane segment spans residues 150-168; the sequence is HYLFFLGLYRALYLFNWIW. An interaction with the K-D-E-L motif on target proteins region spans residues 159–169; the sequence is RALYLFNWIWR. Topologically, residues 169–178 are lumenal; it reads RFSFEGFFDL. The helical transmembrane segment at 179 to 199 threads the bilayer; the sequence is IAIVAGVVQTILYCDFFYLYV. Topologically, residues 200–212 are cytoplasmic; that stretch reads TKVLKGKKLSLPA. The interval 204-207 is important for recycling of cargo proteins with the sequence motif K-D-E-L from the Golgi to the endoplasmic reticulum; sequence KGKK.

This sequence belongs to the ERD2 family.

It is found in the endoplasmic reticulum membrane. Its subcellular location is the golgi apparatus membrane. It localises to the cytoplasmic vesicle. The protein resides in the COPI-coated vesicle membrane. In terms of biological role, receptor for the C-terminal sequence motif K-D-E-L that is present on endoplasmic reticulum resident proteins and that mediates their recycling from the Golgi back to the endoplasmic reticulum. Binding is pH dependent, and is optimal at pH 5-5.4. This is ER lumen protein-retaining receptor 2 (kdelr2) from Xenopus laevis (African clawed frog).